Here is a 408-residue protein sequence, read N- to C-terminus: Secreted mono- and diacylglycerol lipase 2 (408 aa).

The signal sequence occupies residues 1–24 (MRFKLADSLSLITVQLILATSTLA). Asn177 is a glycosylation site (N-linked (GlcNAc...) asparagine). Ser217 serves as the catalytic Nucleophile. Residues Asp283 and His374 contribute to the active site.

It belongs to the AB hydrolase superfamily. Lipase family. Class 3 subfamily.

It localises to the secreted. It catalyses the reaction a monoacylglycerol + H2O = glycerol + a fatty acid + H(+). The catalysed reaction is a diacylglycerol + H2O = a monoacylglycerol + a fatty acid + H(+). In terms of biological role, secreted mono- and diacylglycerol lipase involved in plant virulence. Has a substrate preference for p-nitrophenyl esters with a carbon chain length of C10 (p-nitrophenyl caprate). The protein is Secreted mono- and diacylglycerol lipase 2 of Gibberella zeae (strain ATCC MYA-4620 / CBS 123657 / FGSC 9075 / NRRL 31084 / PH-1) (Wheat head blight fungus).